Here is a 218-residue protein sequence, read N- to C-terminus: Probable glutamine ABC transporter permease protein GlnP (218 aa).

3 helical membrane passes run 19 to 39 (FLVT…FGLI), 65 to 85 (LPLL…GIKL), and 188 to 208 (FFPI…SLSL). The 192-residue stretch at 19–210 (FLVTLYVAFI…AVNYSLSLAA (192 aa)) folds into the ABC transmembrane type-1 domain.

This sequence belongs to the binding-protein-dependent transport system permease family. In terms of assembly, the complex is composed of two ATP-binding proteins (GlnQ), two transmembrane proteins (GlnM and GlnP) and a solute-binding protein (GlnH).

It localises to the cell membrane. Functionally, part of the ABC transporter complex GlnHMPQ involved in glutamine transport. Probably responsible for the translocation of the substrate across the membrane. The protein is Probable glutamine ABC transporter permease protein GlnP (glnP) of Bacillus subtilis (strain 168).